Consider the following 213-residue polypeptide: Orotate phosphoribosyltransferase (213 aa).

5-phospho-alpha-D-ribose 1-diphosphate is bound at residue lysine 26. 34-35 is an orotate binding site; the sequence is FF. 5-phospho-alpha-D-ribose 1-diphosphate contacts are provided by residues 72 to 73, arginine 99, lysine 100, lysine 103, histidine 105, and 124 to 132; these read YK and DDVITAGTA. Threonine 128 and arginine 156 together coordinate orotate.

It belongs to the purine/pyrimidine phosphoribosyltransferase family. PyrE subfamily. Homodimer. The cofactor is Mg(2+).

It catalyses the reaction orotidine 5'-phosphate + diphosphate = orotate + 5-phospho-alpha-D-ribose 1-diphosphate. It participates in pyrimidine metabolism; UMP biosynthesis via de novo pathway; UMP from orotate: step 1/2. Functionally, catalyzes the transfer of a ribosyl phosphate group from 5-phosphoribose 1-diphosphate to orotate, leading to the formation of orotidine monophosphate (OMP). In Escherichia coli O127:H6 (strain E2348/69 / EPEC), this protein is Orotate phosphoribosyltransferase.